Consider the following 238-residue polypeptide: Cysteine-rich venom protein pseudechetoxin-like (238 aa).

Positions 1–19 (MIAFTVLLSLAAVLQQSSG) are cleaved as a signal peptide. A propeptide spanning residues 20-28 (TVDFASESS) is cleaved from the precursor. The region spanning 38 to 164 (VDKHNDLRRS…STKYLYVCQY (127 aa)) is the SCP domain. 8 disulfide bridges follow: C75/C153, C92/C165, C148/C162, C184/C191, C187/C196, C200/C233, C209/C227, and C218/C231. Residues 200-233 (CKHNNDFSNCKALAKKSKCQTEWIKSKCPATCFC) form the ShKT domain.

It belongs to the CRISP family. As to expression, expressed by the venom gland.

Its subcellular location is the secreted. In terms of biological role, blocks olfactory (CNGA2) and retinal (CNGA1) CNG channel currents. Does not affect neither depolarization- nor caffeine-induced contraction of smooth muscle. The protein is Cysteine-rich venom protein pseudechetoxin-like of Oxyuranus scutellatus scutellatus (Australian taipan).